The following is a 592-amino-acid chain: MEGKWLLCMLLVLGTAIVEAHDGHDDDVIDIEDDLDDVIEEVEDSKPDTTAPPSSPKVTYKAPVPTGEVYFADSFDRGTLSGWILSKAKKDDTDDEIAKYDGKWEVDEMKESKLPGDKGLVLMSRAKHHAISAKLNKPFLFDTKPLIVQYEVNFQNGIECGGAYVKLLSKTPELNLDQFHDKTPYTIMFGPDKCGEDYKLHFIFRHKNPKTGIYEEKHAKRPDADLKTYFTDKKTHLYTLILNPDNSFEILVDQSVVNSGNLLNDMTPPVNPSREIEDPEDRKPEDWDERPKIPDPEAVKPDDWDEDAPAKIPDEEATKPEGWLDDEPEYVPDPDAEKPEDWDEDMDGEWEAPQIANPKCESAPGCGVWQRPMIDNPNYKGKWKPPMIDNPSYQGIWKPRKIPNPDFFEDLEPFRMTPFSAIGLELWSMTSDIFFDNFIICADRRIVDDWANDGWGLKKAADGAAEPGVVGQMIEAAEERPWLWVVYILTVALPVFLVILFCCSGKKQTSAMEYKKTDAPQPDVKEEEEEKEEEKDKGDEEEEGEEKLEEKQKSDAEEDGGTVSQEEEDRKPKAEEDEILNRSPRNRKPRRE.

The signal sequence occupies residues 1-20 (MEGKWLLCMLLVLGTAIVEA). Residues 21 to 481 (HDGHDDDVID…QMIEAAEERP (461 aa)) lie on the Lumenal side of the membrane. Ca(2+) contacts are provided by S74 and D117. Position 137 is an N6-acetyllysine (K137). A disulfide bridge connects residues C160 and C194. Residues Y164, K166, Y185, and D192 each coordinate an alpha-D-glucoside. The interval 260-345 (GNLLNDMTPP…AEKPEDWDED (86 aa)) is disordered. Over residues 274–319 (REIEDPEDRKPEDWDERPKIPDPEAVKPDDWDEDAPAKIPDEEATK) the composition is skewed to basic and acidic residues. The interval 276 to 409 (IEDPEDRKPE…RKIPNPDFFE (134 aa)) is p domain (Extended arm). Tandem repeats lie at residues 278 to 290 (DPED…WDER), 295 to 307 (DPEA…WDED), 314 to 326 (DEEA…WLDD), 333 to 345 (DPDA…WDED), and 348 to 358 (GEWEAPQIANP). 4 X approximate repeats stretches follow at residues 278–345 (DPED…WDED) and 348–405 (GEWE…IPNP). Positions 323-345 (WLDDEPEYVPDPDAEKPEDWDED) are enriched in acidic residues. The segment at 326-359 (DEPEYVPDPDAEKPEDWDEDMDGEWEAPQIANPK) is interaction with PPIB. A disulfide bridge connects residues C360 and C366. Repeat copies occupy residues 367-377 (GVWQRPMIDNP), 381-391 (GKWKPPMIDNP), and 395-405 (GIWKPRKIPNP). E425 is an an alpha-D-glucoside binding site. D436 provides a ligand contact to Ca(2+). The helical transmembrane segment at 482–502 (WLWVVYILTVALPVFLVILFC) threads the bilayer. S-palmitoyl cysteine attachment occurs at residues C502 and C503. The Cytoplasmic segment spans residues 503–592 (CSGKKQTSAM…SPRNRKPRRE (90 aa)). The interval 503–592 (CSGKKQTSAM…SPRNRKPRRE (90 aa)) is sufficient to mediate interaction with SGIP1. The disordered stretch occupies residues 511-592 (AMEYKKTDAP…SPRNRKPRRE (82 aa)). The segment covering 525 to 547 (KEEEEEKEEEKDKGDEEEEGEEK) has biased composition (acidic residues). S554 is modified (phosphoserine). Residue T562 is modified to Phosphothreonine. S564 carries the post-translational modification Phosphoserine; by MAPK3. S583 carries the post-translational modification Phosphoserine.

This sequence belongs to the calreticulin family. Interacts with MAPK3/ERK1. Interacts with KCNH2. Associates with ribosomes. Interacts with SGIP1; involved in negative regulation of endocytosis. The palmitoylated form interacts with the ribosome-translocon complex component SSR1, promoting efficient folding of glycoproteins. Interacts with SERPINA2P/SERPINA2 and with the S and Z variants of SERPINA1. Interacts with PPIB. Interacts with ZNRF4. Interacts with SMIM22. Interacts with TMX2. Interacts with TMEM35A/NACHO and CHRNA7. Interacts with reticulophagy regulators RETREG2 and RETREG3. Interacts with DNM1L; may form part of a larger protein complex at the ER-mitochondrial interface during mitochondrial fission. Interacts with ADAM7. Phosphorylated at Ser-564 by MAPK3/ERK1. Phosphorylation by MAPK3/ERK1 increases its association with ribosomes. Post-translationally, palmitoylation by DHHC6 leads to the preferential localization to the perinuclear rough ER. It mediates the association of calnexin with the ribosome-translocon complex (RTC) which is required for efficient folding of glycosylated proteins. In terms of processing, ubiquitinated, leading to proteasomal degradation. Probably ubiquitinated by ZNRF4.

The protein resides in the endoplasmic reticulum membrane. It localises to the mitochondrion membrane. It is found in the melanosome membrane. In terms of biological role, calcium-binding protein that interacts with newly synthesized monoglucosylated glycoproteins in the endoplasmic reticulum. It may act in assisting protein assembly and/or in the retention within the ER of unassembled protein subunits. It seems to play a major role in the quality control apparatus of the ER by the retention of incorrectly folded proteins. Associated with partial T-cell antigen receptor complexes that escape the ER of immature thymocytes, it may function as a signaling complex regulating thymocyte maturation. Additionally it may play a role in receptor-mediated endocytosis at the synapse. The protein is Calnexin (CANX) of Pongo abelii (Sumatran orangutan).